Here is a 226-residue protein sequence, read N- to C-terminus: Glycerol-3-phosphate acyltransferase (226 aa).

The next 6 membrane-spanning stretches (helical) occupy residues 1 to 21 (MGLW…LGSF), 56 to 76 (GPGA…IALV), 102 to 122 (LVTL…FLGF), 134 to 154 (ILLA…AVVV), 159 to 178 (IVSL…MVVL), and 182 to 197 (LPYI…YVIL).

Belongs to the PlsY family. Probably interacts with PlsX.

It is found in the cell inner membrane. It carries out the reaction an acyl phosphate + sn-glycerol 3-phosphate = a 1-acyl-sn-glycero-3-phosphate + phosphate. The protein operates within lipid metabolism; phospholipid metabolism. Catalyzes the transfer of an acyl group from acyl-phosphate (acyl-PO(4)) to glycerol-3-phosphate (G3P) to form lysophosphatidic acid (LPA). This enzyme utilizes acyl-phosphate as fatty acyl donor, but not acyl-CoA or acyl-ACP. The chain is Glycerol-3-phosphate acyltransferase from Trichormus variabilis (strain ATCC 29413 / PCC 7937) (Anabaena variabilis).